We begin with the raw amino-acid sequence, 223 residues long: 7-cyano-7-deazaguanine synthase (223 aa).

An ATP-binding site is contributed by 15 to 25 (FSGGQDSTTCL). Zn(2+)-binding residues include Cys-191, Cys-200, Cys-203, and Cys-206.

Belongs to the QueC family. In terms of assembly, homodimer. It depends on Zn(2+) as a cofactor.

It carries out the reaction 7-carboxy-7-deazaguanine + NH4(+) + ATP = 7-cyano-7-deazaguanine + ADP + phosphate + H2O + H(+). It participates in purine metabolism; 7-cyano-7-deazaguanine biosynthesis. In terms of biological role, catalyzes the ATP-dependent conversion of 7-carboxy-7-deazaguanine (CDG) to 7-cyano-7-deazaguanine (preQ(0)). This chain is 7-cyano-7-deazaguanine synthase, found in Staphylococcus saprophyticus subsp. saprophyticus (strain ATCC 15305 / DSM 20229 / NCIMB 8711 / NCTC 7292 / S-41).